Here is a 233-residue protein sequence, read N- to C-terminus: Thrombin-like enzyme elegaxobin-2 (233 aa).

The Peptidase S1 domain maps to 1–224 (VIGGDECNIN…HLDWIKGIIA (224 aa)). Intrachain disulfides connect cysteine 7/cysteine 138, cysteine 25/cysteine 41, cysteine 73/cysteine 231, cysteine 117/cysteine 185, cysteine 149/cysteine 164, and cysteine 175/cysteine 200. Histidine 40 serves as the catalytic Charge relay system. N-linked (GlcNAc...) asparagine glycosylation occurs at asparagine 78. Residue aspartate 85 is the Charge relay system of the active site. Catalysis depends on serine 179, which acts as the Charge relay system.

Belongs to the peptidase S1 family. Snake venom subfamily. As to quaternary structure, monomer. As to expression, expressed by the venom gland.

It is found in the secreted. In terms of biological role, thrombin-like snake venom serine protease that clots rabbit fibrinogen. Only the beta chain of fibrinogen (FGB) is cleaved, releasing fibrinopeptide B. Human and bovine fibrinogen are unaffected. Also cleaves Met-Lys and Arg-Ser bonds in heat-denatured bovine plasma kininogen to release Lys-bradykinin. The polypeptide is Thrombin-like enzyme elegaxobin-2 (Protobothrops elegans (Elegant pitviper)).